The primary structure comprises 488 residues: Facilitated trehalose transporter Tret1-2 homolog (488 aa).

Residues 1–28 (MKILMRADTHVSYSVPAEGPKANFTFSQ) lie on the Cytoplasmic side of the membrane. A helical membrane pass occupies residues 29–49 (VLAALSVSLCSLVVGFVSAYT). Residues 50–72 (SPALVSMTDRTITSFEVTKDAGS) are Extracellular-facing. Residues 73–93 (WVGGIMPLAALAGGITGGPLI) traverse the membrane as a helical segment. At 94-105 (EYLGRRTTILAT) the chain is on the cytoplasmic side. The chain crosses the membrane as a helical span at residues 106-126 (AVPFIVSSLLIACAVNVIMIL). The Extracellular portion of the chain corresponds to 127–129 (CGR). The chain crosses the membrane as a helical span at residues 130-150 (FLTGFCVGIASLSLPVYLGET). At 151-160 (LQPEVRGTLG) the chain is on the cytoplasmic side. The chain crosses the membrane as a helical span at residues 161 to 181 (LLPTALGNIGILVCYVAGSFM). N182 is a glycosylation site (N-linked (GlcNAc...) asparagine). At 182–184 (NWS) the chain is on the extracellular side. A helical membrane pass occupies residues 185–205 (MLAFLGAALPVPFLILMIIIP). Over 206-268 (ETPRWFVNRG…ELFKRINLKP (63 aa)) the chain is Cytoplasmic. Residues 269–289 (LSISLGLMFFQQFSGINAVIF) traverse the membrane as a helical segment. Over 290-305 (YTVQIFKDAGSTIDSN) the chain is Extracellular. The chain crosses the membrane as a helical span at residues 306-326 (LCTIIVGIVNFFATFMGILLI). Residues 327-332 (DRLGRK) are Cytoplasmic-facing. The helical transmembrane segment at 333 to 353 (ILLYISDIAMILTLSILGGFF) threads the bilayer. Residues 354–372 (YCKAHGPDVSHLGWLPLTC) lie on the Extracellular side of the membrane. Residues 373–393 (FVIYILGFSLGFGPIPWLMMG) form a helical membrane-spanning segment. Over 394–402 (EILPAKIRG) the chain is Cytoplasmic. Residues 403–423 (PAASVVTAFNWFCTFVVTKTF) form a helical membrane-spanning segment. Residues 424-433 (QDLTVAMGAH) lie on the Extracellular side of the membrane. The helical transmembrane segment at 434–454 (GAFWLFGVVCIVGLFFVIICV) threads the bilayer. Topologically, residues 455-488 (PETRGKSLEEIERKMMGRVPISAVVNIKPFSFNM) are cytoplasmic.

It belongs to the major facilitator superfamily. Sugar transporter (TC 2.A.1.1) family. Trehalose transporter subfamily.

Its subcellular location is the cell membrane. Its function is as follows. Fails to transport trehalose. This Drosophila simulans (Fruit fly) protein is Facilitated trehalose transporter Tret1-2 homolog.